The sequence spans 422 residues: Serine--tRNA ligase (422 aa).

Position 229–231 (229–231) interacts with L-serine; sequence TAE. 260–262 contributes to the ATP binding site; it reads RKE. Glu283 is a binding site for L-serine. 347–350 is a binding site for ATP; it reads EISS. Position 383 (Ser383) interacts with L-serine.

This sequence belongs to the class-II aminoacyl-tRNA synthetase family. Type-1 seryl-tRNA synthetase subfamily. As to quaternary structure, homodimer. The tRNA molecule binds across the dimer.

The protein resides in the cytoplasm. It carries out the reaction tRNA(Ser) + L-serine + ATP = L-seryl-tRNA(Ser) + AMP + diphosphate + H(+). It catalyses the reaction tRNA(Sec) + L-serine + ATP = L-seryl-tRNA(Sec) + AMP + diphosphate + H(+). The protein operates within aminoacyl-tRNA biosynthesis; selenocysteinyl-tRNA(Sec) biosynthesis; L-seryl-tRNA(Sec) from L-serine and tRNA(Sec): step 1/1. Catalyzes the attachment of serine to tRNA(Ser). Is also able to aminoacylate tRNA(Sec) with serine, to form the misacylated tRNA L-seryl-tRNA(Sec), which will be further converted into selenocysteinyl-tRNA(Sec). This Geobacter sp. (strain M21) protein is Serine--tRNA ligase.